The following is a 434-amino-acid chain: MISPNPALPTPPHAPTAPGRGARLSRFLSRDTTGGILLLIATVLALVIANSPAADLYERVRGFTFGPEALHLDLSVSAWAADGLLAIFFFVVGLELKQEFVAGSLRDPRVAALPIAAAAGRVIVPAGIFTLINLGAGPEALRGWAIPAATDIAFAVAVVAVVGRRLPPVLRTFLLTLAVVDDLLAITIIAVFYTAGIAFVPLLLASVPLAVFGILVQRGVRAWYVLIPLGVAAWALVHASGIHATIAGVALGLLVPAIATARAGVTHRGTAGREERHALTHFFAERWSPISSGIAVPVFAFFSAGVTVGGLEGLTSSLTDSVAVGIIVALVIGKAAGITGASLLVARLPGIRLDPTLRWPDVLGLSFVAGIGFTVSLLVGELAYGTGSAQDDAVKVGVLIGLLTSAVIGGTLLALRGRWHAAASLHEPVPAAVR.

Residues 1-15 (MISPNPALPTPPHAP) show a composition bias toward pro residues. The disordered stretch occupies residues 1–21 (MISPNPALPTPPHAPTAPGRG). Helical transmembrane passes span 34-54 (GGILLLIATVLALVIANSPAA), 74-94 (LSVSAWAADGLLAIFFFVVGL), 112-132 (ALPIAAAAGRVIVPAGIFTLI), 143-163 (GWAIPAATDIAFAVAVVAVVG), 173-193 (FLLTLAVVDDLLAITIIAVFY), 196-216 (GIAFVPLLLASVPLAVFGILV), 222-242 (AWYVLIPLGVAAWALVHASGI), 245-265 (TIAGVALGLLVPAIATARAGV), 294-314 (IAVPVFAFFSAGVTVGGLEGL), 326-346 (IIVALVIGKAAGITGASLLVA), 362-382 (VLGLSFVAGIGFTVSLLVGEL), and 393-413 (AVKVGVLIGLLTSAVIGGTLL).

It belongs to the NhaA Na(+)/H(+) (TC 2.A.33) antiporter family.

The protein resides in the cell membrane. It carries out the reaction Na(+)(in) + 2 H(+)(out) = Na(+)(out) + 2 H(+)(in). In terms of biological role, na(+)/H(+) antiporter that extrudes sodium in exchange for external protons. The polypeptide is Na(+)/H(+) antiporter NhaA 1 (Clavibacter michiganensis subsp. michiganensis (strain NCPPB 382)).